The following is a 386-amino-acid chain: Succinate--CoA ligase [ADP-forming] subunit beta (386 aa).

In terms of domain architecture, ATP-grasp spans 9–244 (KELLKQFGVT…LDEEDPAEIE (236 aa)). ATP-binding positions include Lys46, 53–55 (GRG), Glu99, Ala102, and Glu107. The Mg(2+) site is built by Asn199 and Asp213. Substrate is bound by residues Asn264 and 321-323 (GIM).

It belongs to the succinate/malate CoA ligase beta subunit family. In terms of assembly, heterotetramer of two alpha and two beta subunits. Mg(2+) serves as cofactor.

The enzyme catalyses succinate + ATP + CoA = succinyl-CoA + ADP + phosphate. It carries out the reaction GTP + succinate + CoA = succinyl-CoA + GDP + phosphate. It functions in the pathway carbohydrate metabolism; tricarboxylic acid cycle; succinate from succinyl-CoA (ligase route): step 1/1. Succinyl-CoA synthetase functions in the citric acid cycle (TCA), coupling the hydrolysis of succinyl-CoA to the synthesis of either ATP or GTP and thus represents the only step of substrate-level phosphorylation in the TCA. The beta subunit provides nucleotide specificity of the enzyme and binds the substrate succinate, while the binding sites for coenzyme A and phosphate are found in the alpha subunit. This chain is Succinate--CoA ligase [ADP-forming] subunit beta, found in Bordetella pertussis (strain Tohama I / ATCC BAA-589 / NCTC 13251).